The primary structure comprises 232 residues: Ribose-5-phosphate isomerase A (232 aa).

Substrate contacts are provided by residues 28–31 (TGST), 83–86 (DGAD), and 96–99 (KGGG). Catalysis depends on glutamate 105, which acts as the Proton acceptor. Lysine 123 serves as a coordination point for substrate.

Belongs to the ribose 5-phosphate isomerase family. Homodimer.

The enzyme catalyses aldehydo-D-ribose 5-phosphate = D-ribulose 5-phosphate. The protein operates within carbohydrate degradation; pentose phosphate pathway; D-ribose 5-phosphate from D-ribulose 5-phosphate (non-oxidative stage): step 1/1. Catalyzes the reversible conversion of ribose-5-phosphate to ribulose 5-phosphate. The protein is Ribose-5-phosphate isomerase A of Rhizobium leguminosarum bv. trifolii (strain WSM2304).